A 460-amino-acid chain; its full sequence is Bifunctional protein GlmU (460 aa).

The tract at residues 1 to 229 (MTNYAIILAA…FNESLGVNDR (229 aa)) is pyrophosphorylase. Residues 8 to 11 (LAAG), Lys22, Gln72, and 77 to 78 (GT) contribute to the UDP-N-acetyl-alpha-D-glucosamine site. Asp102 is a binding site for Mg(2+). UDP-N-acetyl-alpha-D-glucosamine-binding residues include Gly139, Glu154, Asn169, and Asn227. Residue Asn227 participates in Mg(2+) binding. Residues 230–250 (VALAIAETVMRQRITQKHMVN) form a linker region. An N-acetyltransferase region spans residues 251-460 (GVTFQNPETV…RLAHHPSRSK (210 aa)). Residues Arg332 and Lys350 each contribute to the UDP-N-acetyl-alpha-D-glucosamine site. Residue His362 is the Proton acceptor of the active site. The UDP-N-acetyl-alpha-D-glucosamine site is built by Tyr365 and Asn376. Acetyl-CoA contacts are provided by residues Ala379, 385-386 (NY), Ser404, Ala422, and Arg439.

It in the N-terminal section; belongs to the N-acetylglucosamine-1-phosphate uridyltransferase family. This sequence in the C-terminal section; belongs to the transferase hexapeptide repeat family. In terms of assembly, homotrimer. Mg(2+) is required as a cofactor.

The protein localises to the cytoplasm. It catalyses the reaction alpha-D-glucosamine 1-phosphate + acetyl-CoA = N-acetyl-alpha-D-glucosamine 1-phosphate + CoA + H(+). It carries out the reaction N-acetyl-alpha-D-glucosamine 1-phosphate + UTP + H(+) = UDP-N-acetyl-alpha-D-glucosamine + diphosphate. It functions in the pathway nucleotide-sugar biosynthesis; UDP-N-acetyl-alpha-D-glucosamine biosynthesis; N-acetyl-alpha-D-glucosamine 1-phosphate from alpha-D-glucosamine 6-phosphate (route II): step 2/2. It participates in nucleotide-sugar biosynthesis; UDP-N-acetyl-alpha-D-glucosamine biosynthesis; UDP-N-acetyl-alpha-D-glucosamine from N-acetyl-alpha-D-glucosamine 1-phosphate: step 1/1. Its pathway is bacterial outer membrane biogenesis; LPS lipid A biosynthesis. In terms of biological role, catalyzes the last two sequential reactions in the de novo biosynthetic pathway for UDP-N-acetylglucosamine (UDP-GlcNAc). The C-terminal domain catalyzes the transfer of acetyl group from acetyl coenzyme A to glucosamine-1-phosphate (GlcN-1-P) to produce N-acetylglucosamine-1-phosphate (GlcNAc-1-P), which is converted into UDP-GlcNAc by the transfer of uridine 5-monophosphate (from uridine 5-triphosphate), a reaction catalyzed by the N-terminal domain. The polypeptide is Bifunctional protein GlmU (Streptococcus pyogenes serotype M1).